The following is a 287-amino-acid chain: Protoheme IX farnesyltransferase (287 aa).

7 helical membrane-spanning segments follow: residues 19 to 39, 100 to 120, 134 to 154, 162 to 182, 212 to 232, 233 to 253, and 267 to 287; these read LMVA…VTIT, MVLC…IVAV, FALL…WLAV, MLVV…WLHA, VWFH…LLEG, VGMR…AMLA, and VLCA…VSLF.

This sequence belongs to the UbiA prenyltransferase family. Protoheme IX farnesyltransferase subfamily.

The protein localises to the cell inner membrane. The catalysed reaction is heme b + (2E,6E)-farnesyl diphosphate + H2O = Fe(II)-heme o + diphosphate. The protein operates within porphyrin-containing compound metabolism; heme O biosynthesis; heme O from protoheme: step 1/1. In terms of biological role, converts heme B (protoheme IX) to heme O by substitution of the vinyl group on carbon 2 of heme B porphyrin ring with a hydroxyethyl farnesyl side group. This chain is Protoheme IX farnesyltransferase, found in Nitratidesulfovibrio vulgaris (strain DP4) (Desulfovibrio vulgaris).